A 339-amino-acid chain; its full sequence is DNA-directed RNA polymerase subunit alpha (339 aa).

Positions 1–233 (MVREEVAGST…DLFLPFLHAE (233 aa)) are alpha N-terminal domain (alpha-NTD). The interval 264–339 (KKGIPLNCIF…IDLLKNKLSF (76 aa)) is alpha C-terminal domain (alpha-CTD).

Belongs to the RNA polymerase alpha chain family. In terms of assembly, in plastids the minimal PEP RNA polymerase catalytic core is composed of four subunits: alpha, beta, beta', and beta''. When a (nuclear-encoded) sigma factor is associated with the core the holoenzyme is formed, which can initiate transcription.

The protein resides in the plastid. Its subcellular location is the chloroplast. It catalyses the reaction RNA(n) + a ribonucleoside 5'-triphosphate = RNA(n+1) + diphosphate. DNA-dependent RNA polymerase catalyzes the transcription of DNA into RNA using the four ribonucleoside triphosphates as substrates. The polypeptide is DNA-directed RNA polymerase subunit alpha (Crithopsis delileana).